A 376-amino-acid polypeptide reads, in one-letter code: Erythronate-4-phosphate dehydrogenase (376 aa).

Substrate-binding residues include Ser-45 and Thr-67. NAD(+) is bound by residues Asp-147, 209 to 211 (ASR), and Asp-235. Residue Arg-211 is part of the active site. Glu-240 is an active-site residue. His-257 functions as the Proton donor in the catalytic mechanism. Gly-260 contributes to the NAD(+) binding site. Tyr-261 provides a ligand contact to substrate.

The protein belongs to the D-isomer specific 2-hydroxyacid dehydrogenase family. PdxB subfamily. Homodimer.

It is found in the cytoplasm. It carries out the reaction 4-phospho-D-erythronate + NAD(+) = (R)-3-hydroxy-2-oxo-4-phosphooxybutanoate + NADH + H(+). It participates in cofactor biosynthesis; pyridoxine 5'-phosphate biosynthesis; pyridoxine 5'-phosphate from D-erythrose 4-phosphate: step 2/5. Functionally, catalyzes the oxidation of erythronate-4-phosphate to 3-hydroxy-2-oxo-4-phosphonooxybutanoate. The polypeptide is Erythronate-4-phosphate dehydrogenase (Aeromonas hydrophila subsp. hydrophila (strain ATCC 7966 / DSM 30187 / BCRC 13018 / CCUG 14551 / JCM 1027 / KCTC 2358 / NCIMB 9240 / NCTC 8049)).